Reading from the N-terminus, the 319-residue chain is Cytochrome f (319 aa).

The signal sequence occupies residues 1–35; the sequence is MQNKDACKSLSSWVSLSISLLVLTVPLIWPYNSTA. Residues Phe36, Cys56, Cys59, and His60 each coordinate heme. Residues 285–305 form a helical membrane-spanning segment; the sequence is IQGLLVFFASVILAQIFLVLK.

This sequence belongs to the cytochrome f family. As to quaternary structure, the 4 large subunits of the cytochrome b6-f complex are cytochrome b6, subunit IV (17 kDa polypeptide, petD), cytochrome f and the Rieske protein, while the 4 small subunits are PetG, PetL, PetM and PetN. The complex functions as a dimer. The cofactor is heme.

The protein resides in the plastid. Its subcellular location is the chloroplast thylakoid membrane. Its function is as follows. Component of the cytochrome b6-f complex, which mediates electron transfer between photosystem II (PSII) and photosystem I (PSI), cyclic electron flow around PSI, and state transitions. The sequence is that of Cytochrome f from Staurastrum punctulatum (Green alga).